We begin with the raw amino-acid sequence, 174 residues long: Gamma-crystallin C (174 aa).

Beta/gamma crystallin 'Greek key' domains are found at residues 2 to 40 (GKITFYEDRGFQGRCYECSSDCPNLQTYFSRCNSIRVDS) and 41 to 83 (GCWM…RLIP). An S-methylcysteine modification is found at Cys-23. The segment at 84 to 87 (HTGS) is connecting peptide. Beta/gamma crystallin 'Greek key' domains are found at residues 88 to 128 (HRMR…HVLE) and 129 to 171 (GCWV…RRVV).

Belongs to the beta/gamma-crystallin family.

Functionally, crystallins are the dominant structural components of the vertebrate eye lens. In Rattus norvegicus (Rat), this protein is Gamma-crystallin C (Crygc).